A 246-amino-acid polypeptide reads, in one-letter code: Histone H1 (246 aa).

Disordered stretches follow at residues 1–51 (MATD…PTHL) and 105–246 (GGKL…KAKK). The segment covering 9–34 (PAPLVDAAPEAPADAPAAPAADANAA) has biased composition (low complexity). Residues 35–47 (KAKKATAPKKRAS) are compositionally biased toward basic residues. An H15 domain is found at 49-119 (THLPYAEMVS…KVKNSYKLSS (71 aa)). Composition is skewed to basic residues over residues 129 to 189 (AAPK…KAKP) and 198 to 208 (PLAKKAGRAKA). Positions 224-235 (KKAAPSKKAATP) are enriched in low complexity.

This sequence belongs to the histone H1/H5 family.

Its subcellular location is the nucleus. It is found in the chromosome. Functionally, histones H1 are necessary for the condensation of nucleosome chains into higher-order structures. This chain is Histone H1, found in Zea mays (Maize).